A 426-amino-acid polypeptide reads, in one-letter code: DNA primase DnaG (426 aa).

Positions 165–241 (DEIIIVEGRA…DIDYVAKAPP (77 aa)) constitute a Toprim domain. Positions 171, 215, and 217 each coordinate Mg(2+). Residues 278 to 298 (PAVEERPQPPQPQPPAVQPVQ) form a disordered region. Residues 285-294 (QPPQPQPPAV) are compositionally biased toward pro residues.

The protein belongs to the archaeal DnaG primase family. In terms of assembly, forms a ternary complex with MCM helicase and DNA. Component of the archaeal exosome complex. Mg(2+) is required as a cofactor.

It carries out the reaction ssDNA + n NTP = ssDNA/pppN(pN)n-1 hybrid + (n-1) diphosphate.. Its function is as follows. RNA polymerase that catalyzes the synthesis of short RNA molecules used as primers for DNA polymerase during DNA replication. Also part of the exosome, which is a complex involved in RNA degradation. Acts as a poly(A)-binding protein that enhances the interaction between heteromeric, adenine-rich transcripts and the exosome. The polypeptide is DNA primase DnaG (Hyperthermus butylicus (strain DSM 5456 / JCM 9403 / PLM1-5)).